The primary structure comprises 269 residues: GTP cyclohydrolase FolE2 1 (269 aa).

This sequence belongs to the GTP cyclohydrolase IV family.

The catalysed reaction is GTP + H2O = 7,8-dihydroneopterin 3'-triphosphate + formate + H(+). Its pathway is cofactor biosynthesis; 7,8-dihydroneopterin triphosphate biosynthesis; 7,8-dihydroneopterin triphosphate from GTP: step 1/1. Functionally, converts GTP to 7,8-dihydroneopterin triphosphate. This Burkholderia cenocepacia (strain HI2424) protein is GTP cyclohydrolase FolE2 1.